Reading from the N-terminus, the 421-residue chain is Gamma-glutamyl phosphate reductase (421 aa).

It belongs to the gamma-glutamyl phosphate reductase family.

Its subcellular location is the cytoplasm. The enzyme catalyses L-glutamate 5-semialdehyde + phosphate + NADP(+) = L-glutamyl 5-phosphate + NADPH + H(+). The protein operates within amino-acid biosynthesis; L-proline biosynthesis; L-glutamate 5-semialdehyde from L-glutamate: step 2/2. In terms of biological role, catalyzes the NADPH-dependent reduction of L-glutamate 5-phosphate into L-glutamate 5-semialdehyde and phosphate. The product spontaneously undergoes cyclization to form 1-pyrroline-5-carboxylate. The polypeptide is Gamma-glutamyl phosphate reductase (Brucella suis biovar 1 (strain 1330)).